Reading from the N-terminus, the 545-residue chain is Lysine--tRNA ligase (545 aa).

Positions 42-50 (PSGVPHIGH) match the 'HIGH' region motif. The short motif at 307–311 (PLSSS) is the 'KMSKS' region element.

This sequence belongs to the class-I aminoacyl-tRNA synthetase family.

The protein resides in the cytoplasm. It carries out the reaction tRNA(Lys) + L-lysine + ATP = L-lysyl-tRNA(Lys) + AMP + diphosphate. In Haloarcula marismortui (strain ATCC 43049 / DSM 3752 / JCM 8966 / VKM B-1809) (Halobacterium marismortui), this protein is Lysine--tRNA ligase.